We begin with the raw amino-acid sequence, 375 residues long: Succinyl-diaminopimelate desuccinylase (375 aa).

Histidine 66 contacts Zn(2+). Aspartate 68 is an active-site residue. Residue aspartate 99 coordinates Zn(2+). Glutamate 133 acts as the Proton acceptor in catalysis. Zn(2+)-binding residues include glutamate 134, glutamate 162, and histidine 348.

Belongs to the peptidase M20A family. DapE subfamily. As to quaternary structure, homodimer. It depends on Zn(2+) as a cofactor. The cofactor is Co(2+).

The enzyme catalyses N-succinyl-(2S,6S)-2,6-diaminopimelate + H2O = (2S,6S)-2,6-diaminopimelate + succinate. It participates in amino-acid biosynthesis; L-lysine biosynthesis via DAP pathway; LL-2,6-diaminopimelate from (S)-tetrahydrodipicolinate (succinylase route): step 3/3. Functionally, catalyzes the hydrolysis of N-succinyl-L,L-diaminopimelic acid (SDAP), forming succinate and LL-2,6-diaminopimelate (DAP), an intermediate involved in the bacterial biosynthesis of lysine and meso-diaminopimelic acid, an essential component of bacterial cell walls. The chain is Succinyl-diaminopimelate desuccinylase from Escherichia coli O6:K15:H31 (strain 536 / UPEC).